The sequence spans 103 residues: N(4)-acetylcytidine amidohydrolase (103 aa).

Residues 6–100 (ITFFQRFQDD…GESQFYVIEF (95 aa)) enclose the ASCH domain. Lysine 21 (proton acceptor) is an active-site residue. Catalysis depends on threonine 24, which acts as the Nucleophile. The active-site Proton donor is glutamate 74.

Belongs to the N(4)-acetylcytidine amidohydrolase family.

The enzyme catalyses N(4)-acetylcytidine + H2O = cytidine + acetate + H(+). The catalysed reaction is N(4)-acetyl-2'-deoxycytidine + H2O = 2'-deoxycytidine + acetate + H(+). It catalyses the reaction N(4)-acetylcytosine + H2O = cytosine + acetate + H(+). Catalyzes the hydrolysis of N(4)-acetylcytidine (ac4C). The sequence is that of N(4)-acetylcytidine amidohydrolase from Klebsiella pneumoniae subsp. pneumoniae (strain ATCC 700721 / MGH 78578).